The following is a 247-amino-acid chain: C-X-C motif chemokine 16 (247 aa).

The N-terminal stretch at 1–26 (MRRGFGPLALTLFLFFFALLTLPGDG) is a signal peptide. Residues 27–198 (NQGSVAGSCY…EPGAGAGTQA (172 aa)) are Extracellular-facing. Cystine bridges form between Cys-35–Cys-65 and Cys-37–Cys-79. The tract at residues 120–152 (IPEATEGKPPDTSTAVQFQSTQQSTFPSGAPSL) is disordered. Over residues 131–147 (TSTAVQFQSTQQSTFPS) the composition is skewed to low complexity. A helical transmembrane segment spans residues 199 to 219 (LVPVLSLLAIVFFLVAAMVCV). The Cytoplasmic segment spans residues 220–247 (LCNRRVTRQSSSGLQLCYTPVEPRPQGL).

It belongs to the intercrine alpha (chemokine CxC) family. In terms of processing, glycosylated.

It localises to the membrane. Functionally, induces a strong chemotactic response. Induces calcium mobilization. Binds to CXCR6/Bonzo. Also acts as a scavenger receptor on macrophages, which specifically binds to OxLDL (oxidized low density lipoprotein), suggesting that it may be involved in pathophysiology such as atherogenesis. The protein is C-X-C motif chemokine 16 (Cxcl16) of Rattus norvegicus (Rat).